The chain runs to 284 residues: NAD kinase (284 aa).

Asp-70 serves as the catalytic Proton acceptor. NAD(+)-binding positions include 70-71, 139-140, Lys-167, Asp-169, Leu-177, 180-185, and Gln-236; these read DG, NE, and TAYNLS.

This sequence belongs to the NAD kinase family. The cofactor is a divalent metal cation.

It localises to the cytoplasm. The enzyme catalyses NAD(+) + ATP = ADP + NADP(+) + H(+). Functionally, involved in the regulation of the intracellular balance of NAD and NADP, and is a key enzyme in the biosynthesis of NADP. Catalyzes specifically the phosphorylation on 2'-hydroxyl of the adenosine moiety of NAD to yield NADP. This Helicobacter pylori (strain ATCC 700392 / 26695) (Campylobacter pylori) protein is NAD kinase.